Reading from the N-terminus, the 470-residue chain is E3 ubiquitin-protein ligase TRIM21 (470 aa).

The RING-type zinc-finger motif lies at 20–59; that stretch reads CSICLDPMVEPMSIECGHCFCKECIFEVGKNGGSSCPECR. Residues Cys-96, His-99, Cys-118, and His-124 each contribute to the Zn(2+) site. The segment at 96–127 adopts a B box-type zinc-finger fold; sequence CMKHGEKLHLFCEEDGQALCWVCAQSGKHRDH. A coiled-coil region spans residues 188–250; sequence LQNSLLAQEE…RGSELELLQE (63 aa). Residues 272-470 enclose the B30.2/SPRY domain; the sequence is DLTSTCPVPG…APLKLCPLKM (199 aa).

The protein belongs to the TRIM/RBCC family. Homotrimer. Component of a SCF(SKP2)-like complex containing CUL1, SKP1, TRIM21 and SKP2. Interacts with CALR, CUL1, FBXW11, HSPA5, IKBKB, IRF3, SKP1 and VCP. Interacts with SKP2; the interaction with SKP2 does not depend on an intact F-box domain. Interacts (via N-terminus and C-terminus) with DCP2 (via N-terminus and C-terminus). Interacts (via C-terminus) with IRF8 (via C-terminus). Interacts with ULK1, BECN1 and with ATG8 family members, including GABARAP, GABARAPL1, GABARAPL2 and MAP1LC3C/LC3C. Interacts with TRIM21 and SQSTM1/sequestosome 1. Interacts with IRF3. Interacts (via the SPRY domain) with NMI (via coiled-coil domain); the interaction promotes 'Lys-63'-linked ubiquitination of NMI. Interacts with IFI35 and NMI; the interaction facilitates NMI-IFI35 complex formation. Post-translationally, autoubiquitinated; does not lead to its proteasomal degradation. Deubiquitinated by USP4; leading to its stabilization. Autoubiquitinated.

The protein resides in the cytoplasm. It localises to the cytoplasmic vesicle. Its subcellular location is the autophagosome. It is found in the nucleus. The protein localises to the P-body. The protein resides in the stress granule. It catalyses the reaction S-ubiquitinyl-[E2 ubiquitin-conjugating enzyme]-L-cysteine + [acceptor protein]-L-lysine = [E2 ubiquitin-conjugating enzyme]-L-cysteine + N(6)-ubiquitinyl-[acceptor protein]-L-lysine.. It functions in the pathway protein modification; protein ubiquitination. Its function is as follows. E3 ubiquitin-protein ligase whose activity is dependent on E2 enzymes, UBE2D1, UBE2D2, UBE2E1 and UBE2E2. Forms a ubiquitin ligase complex in cooperation with the E2 UBE2D2 that is used not only for the ubiquitination of USP4 and IKBKB but also for its self-ubiquitination. Component of cullin-RING-based SCF (SKP1-CUL1-F-box protein) E3 ubiquitin-protein ligase complexes such as SCF(SKP2)-like complexes. A TRIM21-containing SCF(SKP2)-like complex is shown to mediate ubiquitination of CDKN1B ('Thr-187' phosphorylated-form), thereby promoting its degradation by the proteasome. Monoubiquitinates IKBKB that will negatively regulates Tax-induced NF-kappa-B signaling. Negatively regulates IFN-beta production post-pathogen recognition by catalyzing polyubiquitin-mediated degradation of IRF3. Mediates the ubiquitin-mediated proteasomal degradation of IgG1 heavy chain, which is linked to the VCP-mediated ER-associated degradation (ERAD) pathway. Promotes IRF8 ubiquitination, which enhanced the ability of IRF8 to stimulate cytokine genes transcription in macrophages. Plays a role in the regulation of the cell cycle progression. Enhances the decapping activity of DCP2. Exists as a ribonucleoprotein particle present in all mammalian cells studied and composed of a single polypeptide and one of four small RNA molecules. At least two isoforms are present in nucleated and red blood cells, and tissue specific differences in RO/SSA proteins have been identified. The common feature of these proteins is their ability to bind HY RNAs.2. Involved in the regulation of innate immunity and the inflammatory response in response to IFNG/IFN-gamma. Organizes autophagic machinery by serving as a platform for the assembly of ULK1, Beclin 1/BECN1 and ATG8 family members and recognizes specific autophagy targets, thus coordinating target recognition with assembly of the autophagic apparatus and initiation of autophagy. Also regulates autophagy through FIP200/RB1CC1 ubiquitination and subsequent decreased protein stability. Represses the innate antiviral response by facilitating the formation of the NMI-IFI35 complex through 'Lys-63'-linked ubiquitination of NMI. During viral infection, promotes cell pyroptosis by mediating 'Lys-6'-linked ubiquitination of ISG12a/IFI27, facilitating its translocation into the mitochondria and subsequent CASP3 activation. When up-regulated through the IFN/JAK/STAT signaling pathway, promotes 'Lys-27'-linked ubiquitination of MAVS, leading to the recruitment of TBK1 and up-regulation of innate immunity. Mediates 'Lys-63'-linked polyubiquitination of G3BP1 in response to heat shock, leading to stress granule disassembly. This is E3 ubiquitin-protein ligase TRIM21 (Trim21) from Mus musculus (Mouse).